The primary structure comprises 125 residues: Large ribosomal subunit protein bL12 (125 aa).

The protein belongs to the bacterial ribosomal protein bL12 family. As to quaternary structure, homodimer. Part of the ribosomal stalk of the 50S ribosomal subunit. Forms a multimeric L10(L12)X complex, where L10 forms an elongated spine to which 2 to 4 L12 dimers bind in a sequential fashion. Binds GTP-bound translation factors.

Functionally, forms part of the ribosomal stalk which helps the ribosome interact with GTP-bound translation factors. Is thus essential for accurate translation. This Nitrobacter winogradskyi (strain ATCC 25391 / DSM 10237 / CIP 104748 / NCIMB 11846 / Nb-255) protein is Large ribosomal subunit protein bL12.